We begin with the raw amino-acid sequence, 186 residues long: MTYRWILPMALLLCFSTTALSVNYDLLRSQLRSSNSACLMLLRQLNGAPQRCPEDTMNFQVPEEIEQAQQFQKEDAALVIYEMLQHTWRIFRRNFASTGWNETIVKNLLVEVHLQMDRLETNLEEIMEEESSTWGNTTILRLKKYYGRISQYLKAKKYSHCAWTVVQAEMLRNLAFLNGLTDYLQN.

An N-terminal signal peptide occupies residues methionine 1–serine 21. Tyrosine 24 is modified (phosphotyrosine). A disulfide bridge connects residues cysteine 52 and cysteine 161. N-linked (GlcNAc...) asparagine glycosylation is found at asparagine 101 and asparagine 136.

The protein belongs to the alpha/beta interferon family. As to quaternary structure, monomer.

The protein localises to the secreted. In terms of biological role, type I interferon cytokine that plays a key role in the innate immune response to infection, developing tumors and other inflammatory stimuli. Signals via binding to high-affinity (IFNAR2) and low-affinity (IFNAR1) heterodimeric receptor, activating the canonical Jak-STAT signaling pathway resulting in transcriptional activation or repression of interferon-regulated genes that encode the effectors of the interferon response, such as antiviral proteins, regulators of cell proliferation and differentiation, and immunoregulatory proteins. Signals mostly via binding to a IFNAR1-IFNAR2 heterodimeric receptor, but can also function with IFNAR1 alone and independently of Jak-STAT pathways. Elicits a wide variety of responses, including antiviral and antibacterial activities, and can regulate the development of B-cells, myelopoiesis and lipopolysaccharide (LPS)-inducible production of tumor necrosis factor. Plays a role in neuronal homeostasis by regulating dopamine turnover and protecting dopaminergic neurons: acts by promoting neuronal autophagy and alpha-synuclein clearance, thereby preventing dopaminergic neuron loss. IFNB1 is more potent than interferon-alpha (IFN-alpha) in inducing the apoptotic and antiproliferative pathways required for control of tumor cell growth. The sequence is that of Interferon beta (IFNB1) from Equus caballus (Horse).